Here is a 276-residue protein sequence, read N- to C-terminus: Bis(5'-nucleosyl)-tetraphosphatase, symmetrical (276 aa).

The protein belongs to the Ap4A hydrolase family.

It carries out the reaction P(1),P(4)-bis(5'-adenosyl) tetraphosphate + H2O = 2 ADP + 2 H(+). Its function is as follows. Hydrolyzes diadenosine 5',5'''-P1,P4-tetraphosphate to yield ADP. The protein is Bis(5'-nucleosyl)-tetraphosphatase, symmetrical of Legionella pneumophila (strain Corby).